We begin with the raw amino-acid sequence, 693 residues long: Golgin subfamily A member 6D (693 aa).

Positions 14–611 (LEESRQNKLA…KLLELQELVL (598 aa)) form a coiled coil. 3 disordered regions span residues 20–70 (NKLA…GDSQ), 497–547 (LPGE…GTEQ), and 662–693 (VEPA…MQDT). The span at 537–547 (LPKEKADGTEQ) shows a compositional bias: basic and acidic residues. A compositionally biased stretch (polar residues) spans 674–693 (PHNNPTVQQIVQLSPVMQDT).

Belongs to the GOLGA6 family.

The chain is Golgin subfamily A member 6D (GOLGA6D) from Homo sapiens (Human).